The following is a 95-amino-acid chain: MSAIEQTAEGLRLRIFLQPKASRDKIIGIHDDELKIAITAPPVDGAANAHLLKYLSKAFKVPKSAIILEKGELNRHKQLFIPEPKLIPEELQPLL.

It belongs to the UPF0235 family.

The sequence is that of UPF0235 protein MS0322 from Mannheimia succiniciproducens (strain KCTC 0769BP / MBEL55E).